The following is a 97-amino-acid chain: Secreted RxLR effector protein BLR05 (97 aa).

Positions 1-21 (MGPQHLLALVVVSILVAAGNA) are cleaved as a signal peptide. The short motif at 32-60 (RALRPSVIADQEHAVHAIPATNFISKDED) is the RxLR-dEER element. Residues 69–89 (IEIIRIAIFSLLVVGVFAIMA) traverse the membrane as a helical segment.

The protein belongs to the RxLR effector family. As to quaternary structure, interacts with host transcription factor NAC069.

It is found in the secreted. It localises to the host endoplasmic reticulum membrane. Its function is as follows. Secreted effector that inhibits stress-induced relocalization of the transcription factor NAC069 to the nucleus, thus affecting its broad role in abiotic and biotic stress responses. This chain is Secreted RxLR effector protein BLR05, found in Bremia lactucae (Lettuce downy mildew).